Here is a 355-residue protein sequence, read N- to C-terminus: 3-dehydroquinate synthase (355 aa).

NAD(+) contacts are provided by residues Glu71 to Lys76, Gly105 to Asp109, Thr129 to Ser130, Lys142, Lys151, and Thr169 to Thr172. Positions 184, 246, and 263 each coordinate Zn(2+).

Belongs to the sugar phosphate cyclases superfamily. Dehydroquinate synthase family. NAD(+) is required as a cofactor. It depends on Co(2+) as a cofactor. The cofactor is Zn(2+).

The protein resides in the cytoplasm. It catalyses the reaction 7-phospho-2-dehydro-3-deoxy-D-arabino-heptonate = 3-dehydroquinate + phosphate. Its pathway is metabolic intermediate biosynthesis; chorismate biosynthesis; chorismate from D-erythrose 4-phosphate and phosphoenolpyruvate: step 2/7. Functionally, catalyzes the conversion of 3-deoxy-D-arabino-heptulosonate 7-phosphate (DAHP) to dehydroquinate (DHQ). This is 3-dehydroquinate synthase from Streptococcus mutans serotype c (strain ATCC 700610 / UA159).